The primary structure comprises 384 residues: Dual-specificity RNA methyltransferase RlmN (384 aa).

Glutamate 105 serves as the catalytic Proton acceptor. The 240-residue stretch at 111 to 350 folds into the Radical SAM core domain; sequence EDDRATLCVS…TIVRKTRGDD (240 aa). Cysteines 118 and 355 form a disulfide. [4Fe-4S] cluster contacts are provided by cysteine 125, cysteine 129, and cysteine 132. Residues 179–180, serine 211, 233–235, and asparagine 312 contribute to the S-adenosyl-L-methionine site; these read GE and SLH. Residue cysteine 355 is the S-methylcysteine intermediate of the active site.

Belongs to the radical SAM superfamily. RlmN family. It depends on [4Fe-4S] cluster as a cofactor.

The protein localises to the cytoplasm. It carries out the reaction adenosine(2503) in 23S rRNA + 2 reduced [2Fe-2S]-[ferredoxin] + 2 S-adenosyl-L-methionine = 2-methyladenosine(2503) in 23S rRNA + 5'-deoxyadenosine + L-methionine + 2 oxidized [2Fe-2S]-[ferredoxin] + S-adenosyl-L-homocysteine. The catalysed reaction is adenosine(37) in tRNA + 2 reduced [2Fe-2S]-[ferredoxin] + 2 S-adenosyl-L-methionine = 2-methyladenosine(37) in tRNA + 5'-deoxyadenosine + L-methionine + 2 oxidized [2Fe-2S]-[ferredoxin] + S-adenosyl-L-homocysteine. Specifically methylates position 2 of adenine 2503 in 23S rRNA and position 2 of adenine 37 in tRNAs. m2A2503 modification seems to play a crucial role in the proofreading step occurring at the peptidyl transferase center and thus would serve to optimize ribosomal fidelity. The polypeptide is Dual-specificity RNA methyltransferase RlmN (Escherichia coli O157:H7).